Reading from the N-terminus, the 209-residue chain is MSGKKRTASSSRWMQEHFDDHYVKLSQKRGLRSRAAFKIEEIQEKDKLIRPGMTVVDLGAAPGGWSQIAVKLAGDKGKVIACDILPMDPIVGVDFLQGDFREEKVLDALLTRVGDAKVDVVLSDMAPNMSGTGGVDQPRAMYLVELALDMCHQVLAPNGSFAVKVFQGEGFDEYMKAVKEAFKTVKTRKPDSSRPRSREVYLVATGYKL.

S-adenosyl-L-methionine is bound by residues G63, W65, D83, D99, and D124. K164 functions as the Proton acceptor in the catalytic mechanism.

Belongs to the class I-like SAM-binding methyltransferase superfamily. RNA methyltransferase RlmE family.

Its subcellular location is the cytoplasm. It carries out the reaction uridine(2552) in 23S rRNA + S-adenosyl-L-methionine = 2'-O-methyluridine(2552) in 23S rRNA + S-adenosyl-L-homocysteine + H(+). Functionally, specifically methylates the uridine in position 2552 of 23S rRNA at the 2'-O position of the ribose in the fully assembled 50S ribosomal subunit. In Shewanella pealeana (strain ATCC 700345 / ANG-SQ1), this protein is Ribosomal RNA large subunit methyltransferase E.